We begin with the raw amino-acid sequence, 143 residues long: Lysozyme C (143 aa).

The signal sequence occupies residues Met1–Ala15. One can recognise a C-type lysozyme domain in the interval Lys16 to Leu143. Disulfide bonds link Cys21–Cys141, Cys45–Cys129, Cys79–Cys94, and Cys90–Cys108. Active-site residues include Glu50 and Asp67.

This sequence belongs to the glycosyl hydrolase 22 family. As to quaternary structure, monomer.

It is found in the secreted. It catalyses the reaction Hydrolysis of (1-&gt;4)-beta-linkages between N-acetylmuramic acid and N-acetyl-D-glucosamine residues in a peptidoglycan and between N-acetyl-D-glucosamine residues in chitodextrins.. Its function is as follows. Lysozymes have primarily a bacteriolytic function; those in tissues and body fluids are associated with the monocyte-macrophage system and enhance the activity of immunoagents. The protein is Lysozyme C of Takifugu rubripes (Japanese pufferfish).